The chain runs to 363 residues: tRNA N6-adenosine threonylcarbamoyltransferase (363 aa).

Fe cation-binding residues include His121 and His125. Substrate is bound by residues 143-147 (LASGG), Asp176, Gly189, and Asn287. A Fe cation-binding site is contributed by Asp315.

It belongs to the KAE1 / TsaD family. It depends on Fe(2+) as a cofactor.

It localises to the cytoplasm. It carries out the reaction L-threonylcarbamoyladenylate + adenosine(37) in tRNA = N(6)-L-threonylcarbamoyladenosine(37) in tRNA + AMP + H(+). Its function is as follows. Required for the formation of a threonylcarbamoyl group on adenosine at position 37 (t(6)A37) in tRNAs that read codons beginning with adenine. Is involved in the transfer of the threonylcarbamoyl moiety of threonylcarbamoyl-AMP (TC-AMP) to the N6 group of A37, together with TsaE and TsaB. TsaD likely plays a direct catalytic role in this reaction. In Rhodopseudomonas palustris (strain ATCC BAA-98 / CGA009), this protein is tRNA N6-adenosine threonylcarbamoyltransferase.